Here is a 1733-residue protein sequence, read N- to C-terminus: Gag-Pol polyprotein (1733 aa).

Gly2 carries the N-myristoyl glycine; by host lipid modification. A compositionally biased stretch (pro residues) spans 108-121 (LPTAPVLPPGPSAQ). 3 disordered regions span residues 108 to 218 (LPTA…LRMG), 449 to 469 (KEER…RRRH), and 511 to 550 (WAKD…EPRI). The short motif at 109–112 (PTAP) is the PTAP/PSAP motif element. Positions 128–132 (LYPAL) match the LYPX(n)L motif motif. A PPXY motif motif is present at residues 161-164 (PPPY). Residue Ser190 is modified to Phosphoserine; by host. The stretch at 436–476 (EEREERIRREIEEKEERRRAEDEQRERERDRRRHREMSKLL) forms a coiled coil. Residues 449–464 (KEERRRAEDEQRERER) show a composition bias toward basic and acidic residues. The CCHC-type zinc finger occupies 500-517 (DQCAYCKEKGHWAKDCPK). A compositionally biased stretch (low complexity) spans 526–535 (RPQTSLLTLG). The Peptidase A2 domain occupies 559-629 (VTFLVDTGAQ…CPYPLLGRDL (71 aa)). Asp564 (protease; shared with dimeric partner) is an active-site residue. RNA is bound by residues Tyr721, Asp771, Arg773, and Pro787. The region spanning 739–930 (LDQGILVPCQ…KQVKYLGYLL (192 aa)) is the Reverse transcriptase domain. Asp807 serves as a coordination point for Mg(2+). Positions 851 and 853 each coordinate RNA. Mg(2+)-binding residues include Asp881 and Asp882. Arg941, Arg955, Arg958, and Phe966 together coordinate DNA. RNA-binding residues include Lys1054 and Lys1055. DNA is bound at residue Trp1063. Lys1082 contributes to the RNA binding site. Arg1113 is a binding site for DNA. One can recognise an RNase H type-1 domain in the interval 1172–1318 (PDADYTWYTD…ADQAAREAAM (147 aa)). Asp1181 contributes to the Mg(2+) binding site. 2 residues coordinate RNA: Ser1184 and Leu1186. The DNA site is built by Gln1187, Ser1214, and Gln1216. Positions 1219 and 1240 each coordinate Mg(2+). Positions 1242 and 1266 each coordinate RNA. Mg(2+) contacts are provided by Asp1310, Asp1453, and Asp1512. Positions 1442-1600 (RGHRPGTHWE…TPYEILYGAP (159 aa)) constitute an Integrase catalytic domain.

Homohexamer. Further associates as homomultimer. The virus core is composed of a lattice formed from hexagonal rings, each containing six capsid monomers. As to quaternary structure, homodimer. The protease is a homodimer, whose active site consists of two apposed aspartic acid residues. The reverse transcriptase is a monomer. The cofactor is Mg(2+). Requires Mn(2+) as cofactor. In terms of processing, specific enzymatic cleavages by the viral protease yield mature proteins. The protease is released by autocatalytic cleavage. The polyprotein is cleaved during and after budding, this process is termed maturation. Post-translationally, sumoylated. Required for virus replication. Phosphorylated on serine residues.

The protein localises to the host cell membrane. It is found in the virion. It carries out the reaction DNA(n) + a 2'-deoxyribonucleoside 5'-triphosphate = DNA(n+1) + diphosphate. The enzyme catalyses Endonucleolytic cleavage to 5'-phosphomonoester.. In terms of biological role, plays a role in budding and is processed by the viral protease during virion maturation outside the cell. During budding, it recruits, in a PPXY-dependent or independent manner, Nedd4-like ubiquitin ligases that conjugate ubiquitin molecules to Gag, or to Gag binding host factors. Interaction with HECT ubiquitin ligases probably link the viral protein to the host ESCRT pathway and facilitate release. Targets Gag and gag-pol polyproteins to the plasma membrane via a multipartite membrane binding signal, that includes its myristoylated N-terminus. Also mediates nuclear localization of the pre-integration complex. Functionally, forms the spherical core of the virion that encapsulates the genomic RNA-nucleocapsid complex. Its function is as follows. Involved in the packaging and encapsidation of two copies of the genome. Binds with high affinity to conserved UCUG elements within the packaging signal, located near the 5'-end of the genome. This binding is dependent on genome dimerization. In terms of biological role, the aspartyl protease mediates proteolytic cleavages of Gag and Gag-Pol polyproteins during or shortly after the release of the virion from the plasma membrane. Cleavages take place as an ordered, step-wise cascade to yield mature proteins. This process is called maturation. Displays maximal activity during the budding process just prior to particle release from the cell. Multifunctional enzyme that converts the viral dimeric RNA genome into dsDNA in the cytoplasm, shortly after virus entry into the cell. This enzyme displays a DNA polymerase activity that can copy either DNA or RNA templates, and a ribonuclease H (RNase H) activity that cleaves the RNA strand of RNA-DNA heteroduplexes in a partially processive 3' to 5' endonucleasic mode. Conversion of viral genomic RNA into dsDNA requires many steps. A tRNA binds to the primer-binding site (PBS) situated at the 5' end of the viral RNA. RT uses the 3' end of the tRNA primer to perform a short round of RNA-dependent minus-strand DNA synthesis. The reading proceeds through the U5 region and ends after the repeated (R) region which is present at both ends of viral RNA. The portion of the RNA-DNA heteroduplex is digested by the RNase H, resulting in a ssDNA product attached to the tRNA primer. This ssDNA/tRNA hybridizes with the identical R region situated at the 3' end of viral RNA. This template exchange, known as minus-strand DNA strong stop transfer, can be either intra- or intermolecular. RT uses the 3' end of this newly synthesized short ssDNA to perform the RNA-dependent minus-strand DNA synthesis of the whole template. RNase H digests the RNA template except for a polypurine tract (PPT) situated at the 5' end of the genome. It is not clear if both polymerase and RNase H activities are simultaneous. RNase H probably can proceed both in a polymerase-dependent (RNA cut into small fragments by the same RT performing DNA synthesis) and a polymerase-independent mode (cleavage of remaining RNA fragments by free RTs). Secondly, RT performs DNA-directed plus-strand DNA synthesis using the PPT that has not been removed by RNase H as primers. PPT and tRNA primers are then removed by RNase H. The 3' and 5' ssDNA PBS regions hybridize to form a circular dsDNA intermediate. Strand displacement synthesis by RT to the PBS and PPT ends produces a blunt ended, linear dsDNA copy of the viral genome that includes long terminal repeats (LTRs) at both ends. Functionally, catalyzes viral DNA integration into the host chromosome, by performing a series of DNA cutting and joining reactions. This enzyme activity takes place after virion entry into a cell and reverse transcription of the RNA genome in dsDNA. The first step in the integration process is 3' processing. This step requires a complex comprising the viral genome, matrix protein and integrase. This complex is called the pre-integration complex (PIC). The integrase protein removes 2 nucleotides from each 3' end of the viral DNA, leaving recessed CA OH's at the 3' ends. In the second step that requires cell division, the PIC enters cell nucleus. In the third step, termed strand transfer, the integrase protein joins the previously processed 3' ends to the 5' ends of strands of target cellular DNA at the site of integration. The last step is viral DNA integration into host chromosome. This is Gag-Pol polyprotein (gag-pol) from Homo sapiens (Human).